A 94-amino-acid polypeptide reads, in one-letter code: MRTFAIFLLIALGWLQYTLWFGKNGMSDYAQVSNDVALQEEVNQGLRNRNEQMFAEIDDLKKGSEAIEERARHELGMIKKGETFYRIIDENSEG.

The Cytoplasmic segment spans residues 1–3 (MRT). A helical transmembrane segment spans residues 4 to 21 (FAIFLLIALGWLQYTLWF). Topologically, residues 22–94 (GKNGMSDYAQ…YRIIDENSEG (73 aa)) are periplasmic. A coiled-coil region spans residues 33-71 (SNDVALQEEVNQGLRNRNEQMFAEIDDLKKGSEAIEERA).

The protein belongs to the FtsB family. In terms of assembly, part of a complex composed of FtsB, FtsL and FtsQ.

The protein resides in the cell inner membrane. Essential cell division protein. May link together the upstream cell division proteins, which are predominantly cytoplasmic, with the downstream cell division proteins, which are predominantly periplasmic. The sequence is that of Cell division protein FtsB from Aliivibrio fischeri (strain ATCC 700601 / ES114) (Vibrio fischeri).